A 332-amino-acid polypeptide reads, in one-letter code: Ribosomal RNA small subunit methyltransferase H (332 aa).

Residues G39 to Y41, D56, F83, D100, and Q107 each bind S-adenosyl-L-methionine.

It belongs to the methyltransferase superfamily. RsmH family.

Its subcellular location is the cytoplasm. It carries out the reaction cytidine(1402) in 16S rRNA + S-adenosyl-L-methionine = N(4)-methylcytidine(1402) in 16S rRNA + S-adenosyl-L-homocysteine + H(+). Functionally, specifically methylates the N4 position of cytidine in position 1402 (C1402) of 16S rRNA. This chain is Ribosomal RNA small subunit methyltransferase H, found in Bartonella tribocorum (strain CIP 105476 / IBS 506).